Reading from the N-terminus, the 323-residue chain is tRNA U34 carboxymethyltransferase (323 aa).

Carboxy-S-adenosyl-L-methionine is bound by residues lysine 91, tryptophan 105, lysine 110, glycine 130, 181–182, methionine 196, tyrosine 200, and arginine 315; that span reads IE.

It belongs to the class I-like SAM-binding methyltransferase superfamily. CmoB family. Homotetramer.

It carries out the reaction carboxy-S-adenosyl-L-methionine + 5-hydroxyuridine(34) in tRNA = 5-carboxymethoxyuridine(34) in tRNA + S-adenosyl-L-homocysteine + H(+). In terms of biological role, catalyzes carboxymethyl transfer from carboxy-S-adenosyl-L-methionine (Cx-SAM) to 5-hydroxyuridine (ho5U) to form 5-carboxymethoxyuridine (cmo5U) at position 34 in tRNAs. The polypeptide is tRNA U34 carboxymethyltransferase (Yersinia pestis bv. Antiqua (strain Antiqua)).